The chain runs to 595 residues: NADH-quinone oxidoreductase subunit C/D (595 aa).

Residues 1 to 186 are NADH dehydrogenase I subunit C; that stretch reads MAETDIAMPE…TPYMQDKAKQ (186 aa). The interval 210 to 595 is NADH dehydrogenase I subunit D; the sequence is DFMFLNLGPN…IDVVMADVDR (386 aa).

This sequence in the N-terminal section; belongs to the complex I 30 kDa subunit family. In the C-terminal section; belongs to the complex I 49 kDa subunit family. In terms of assembly, NDH-1 is composed of 13 different subunits. Subunits NuoB, CD, E, F, and G constitute the peripheral sector of the complex.

Its subcellular location is the cell inner membrane. It catalyses the reaction a quinone + NADH + 5 H(+)(in) = a quinol + NAD(+) + 4 H(+)(out). Functionally, NDH-1 shuttles electrons from NADH, via FMN and iron-sulfur (Fe-S) centers, to quinones in the respiratory chain. The immediate electron acceptor for the enzyme in this species is believed to be ubiquinone. Couples the redox reaction to proton translocation (for every two electrons transferred, four hydrogen ions are translocated across the cytoplasmic membrane), and thus conserves the redox energy in a proton gradient. The sequence is that of NADH-quinone oxidoreductase subunit C/D from Acinetobacter baumannii (strain AYE).